The sequence spans 841 residues: Formin-like protein 10 (841 aa).

Positions 1–25 (MDGLCYVIFIIFSLLSCAFSPLSYA) are cleaved as a signal peptide. Residues 102-122 (LIPAISAVLAAATLIALAFFF) traverse the membrane as a helical segment. 3 disordered regions span residues 137-166 (SKSL…QNKL), 254-297 (ISSH…RTVR), and 403-512 (KSSW…SKQR). Residues 139-152 (SLASDISQSQQQTL) show a composition bias toward polar residues. The span at 254–278 (ISSHSDSPAMSPSAAMSPPMNSTAP) shows a compositional bias: low complexity. Residues 279-293 (HWSTNQNTHSPSSPE) are compositionally biased toward polar residues. A compositionally biased stretch (pro residues) spans 426-444 (LPPPQRPPPAMPEPPPLVP). The FH2 domain occupies 469–841 (EGTTDRPKPK…KKMEVTSSLA (373 aa)). Residues 502-512 (YNSSNANSKQR) show a composition bias toward polar residues.

It belongs to the formin-like family. Class-I subfamily.

It is found in the membrane. Might be involved in the organization and polarity of the actin cytoskeleton. This Arabidopsis thaliana (Mouse-ear cress) protein is Formin-like protein 10 (FH10).